The primary structure comprises 429 residues: Glutamate-1-semialdehyde 2,1-aminomutase 2 (429 aa).

K268 is subject to N6-(pyridoxal phosphate)lysine.

It belongs to the class-III pyridoxal-phosphate-dependent aminotransferase family. HemL subfamily. Homodimer. Pyridoxal 5'-phosphate is required as a cofactor.

Its subcellular location is the cytoplasm. It carries out the reaction (S)-4-amino-5-oxopentanoate = 5-aminolevulinate. It functions in the pathway porphyrin-containing compound metabolism; protoporphyrin-IX biosynthesis; 5-aminolevulinate from L-glutamyl-tRNA(Glu): step 2/2. The sequence is that of Glutamate-1-semialdehyde 2,1-aminomutase 2 from Staphylococcus aureus (strain MSSA476).